Consider the following 545-residue polypeptide: Chaperonin GroEL (545 aa).

ATP contacts are provided by residues 30-33, K51, 87-91, G415, and D494; these read TMGP and DGTTT.

The protein belongs to the chaperonin (HSP60) family. In terms of assembly, forms a cylinder of 14 subunits composed of two heptameric rings stacked back-to-back. Interacts with the co-chaperonin GroES.

It is found in the cytoplasm. It carries out the reaction ATP + H2O + a folded polypeptide = ADP + phosphate + an unfolded polypeptide.. Its function is as follows. Together with its co-chaperonin GroES, plays an essential role in assisting protein folding. The GroEL-GroES system forms a nano-cage that allows encapsulation of the non-native substrate proteins and provides a physical environment optimized to promote and accelerate protein folding. In Helicobacter hepaticus (strain ATCC 51449 / 3B1), this protein is Chaperonin GroEL.